We begin with the raw amino-acid sequence, 173 residues long: Alpha-crystallin A chain (173 aa).

N-acetylmethionine is present on M1. The segment at 1–63 (MDIAIQHPWF…RTVLDSGVSE (63 aa)) is required for complex formation with BFSP1 and BFSP2. Q6 is subject to Deamidated glutamine; partial. Phosphoserine is present on S45. At Q50 the chain carries Deamidated glutamine; partial. One can recognise a sHSP domain in the interval 52 to 162 (LFRTVLDSGV…GHSERAIPVS (111 aa)). K70 carries the N6-acetyllysine modification. H79 contacts Zn(2+). The residue at position 90 (Q90) is a Deamidated glutamine; partial. The residue at position 99 (K99) is an N6-acetyllysine. Residue H100 coordinates Zn(2+). N101 carries the deamidated asparagine; partial modification. Residues E102 and H107 each contribute to the Zn(2+) site. S122 is subject to Phosphoserine. Position 123 is a deamidated asparagine; partial (N123). A disordered region spans residues 144-173 (PKVPSGVDAGHSERAIPVSREEKPSSAPTS). Positions 153–167 (GHSERAIPVSREEKP) are enriched in basic and acidic residues. H154 lines the Zn(2+) pocket. Residue S162 is glycosylated (O-linked (GlcNAc) serine).

Belongs to the small heat shock protein (HSP20) family. Heteromer composed of three CRYAA and one CRYAB subunits. Inter-subunit bridging via zinc ions enhances stability, which is crucial as there is no protein turn over in the lens. Can also form homodimers and homotetramers (dimers of dimers) which serve as the building blocks of homooligomers. Within homooligomers, the zinc-binding motif is created from residues of 3 different molecules. His-100 and Glu-102 from one molecule are ligands of the zinc ion, and His-107 and His-154 residues from additional molecules complete the site with tetrahedral coordination geometry. Part of a complex required for lens intermediate filament formation composed of BFSP1, BFSP2 and CRYAA. Post-translationally, acetylation at Lys-70 may increase chaperone activity. In terms of processing, undergoes age-dependent proteolytical cleavage at the C-terminus.

It localises to the cytoplasm. The protein localises to the nucleus. In terms of biological role, contributes to the transparency and refractive index of the lens. Acts as a chaperone, preventing aggregation of various proteins under a wide range of stress conditions. Required for the correct formation of lens intermediate filaments as part of a complex composed of BFSP1, BFSP2 and CRYAA. The sequence is that of Alpha-crystallin A chain (CRYAA) from Sus scrofa (Pig).